The primary structure comprises 332 residues: L-lactate dehydrogenase A chain (332 aa).

N-acetylalanine is present on Ala-2. An N6-acetyllysine; alternate modification is found at Lys-5. Lys-5 carries the N6-succinyllysine; alternate modification. At Lys-14 the chain carries N6-acetyllysine. Thr-18 carries the post-translational modification Phosphothreonine. 29–57 (GAVGMACAISILMKDLADELALVDVIEDK) contacts NAD(+). Lys-57 is modified (N6-acetyllysine; alternate). Residue Lys-57 forms a Glycyl lysine isopeptide (Lys-Gly) (interchain with G-Cter in SUMO2); alternate linkage. An N6-acetyllysine modification is found at Lys-81. Arg-99 is a binding site for NAD(+). Arg-106 is a substrate binding site. Lys-118 is subject to N6-acetyllysine; alternate. An N6-succinyllysine; alternate modification is found at Lys-118. Lys-126 is subject to N6-acetyllysine. Residues Asn-138 and Arg-169 each contribute to the substrate site. Catalysis depends on His-193, which acts as the Proton acceptor. 2 positions are modified to N6-acetyllysine: Lys-224 and Lys-232. Tyr-239 carries the phosphotyrosine modification. Lys-243 is subject to N6-acetyllysine. Position 248 (Thr-248) interacts with substrate. The residue at position 309 (Thr-309) is a Phosphothreonine. Ser-310 carries the post-translational modification Phosphoserine. At Lys-318 the chain carries N6-acetyllysine; alternate. Lys-318 is subject to N6-succinyllysine; alternate. Thr-322 is modified (phosphothreonine).

This sequence belongs to the LDH/MDH superfamily. LDH family. Homotetramer. Interacts with PTEN upstream reading frame protein MP31. ISGylated.

The protein resides in the cytoplasm. It carries out the reaction (S)-lactate + NAD(+) = pyruvate + NADH + H(+). It participates in fermentation; pyruvate fermentation to lactate; (S)-lactate from pyruvate: step 1/1. Its function is as follows. Interconverts simultaneously and stereospecifically pyruvate and lactate with concomitant interconversion of NADH and NAD(+). This Pan troglodytes (Chimpanzee) protein is L-lactate dehydrogenase A chain (LDHA).